We begin with the raw amino-acid sequence, 445 residues long: Phosphoglucosamine mutase 1 (445 aa).

The active-site Phosphoserine intermediate is Ser102. Mg(2+) is bound by residues Ser102, Asp241, Asp243, and Asp245. Phosphoserine is present on Ser102.

This sequence belongs to the phosphohexose mutase family. Mg(2+) is required as a cofactor. In terms of processing, activated by phosphorylation.

It catalyses the reaction alpha-D-glucosamine 1-phosphate = D-glucosamine 6-phosphate. Catalyzes the conversion of glucosamine-6-phosphate to glucosamine-1-phosphate. The sequence is that of Phosphoglucosamine mutase 1 from Shewanella sp. (strain MR-7).